Consider the following 204-residue polypeptide: Leucyl/phenylalanyl-tRNA--protein transferase (204 aa).

It belongs to the L/F-transferase family.

The protein resides in the cytoplasm. The catalysed reaction is N-terminal L-lysyl-[protein] + L-leucyl-tRNA(Leu) = N-terminal L-leucyl-L-lysyl-[protein] + tRNA(Leu) + H(+). It carries out the reaction N-terminal L-arginyl-[protein] + L-leucyl-tRNA(Leu) = N-terminal L-leucyl-L-arginyl-[protein] + tRNA(Leu) + H(+). The enzyme catalyses L-phenylalanyl-tRNA(Phe) + an N-terminal L-alpha-aminoacyl-[protein] = an N-terminal L-phenylalanyl-L-alpha-aminoacyl-[protein] + tRNA(Phe). In terms of biological role, functions in the N-end rule pathway of protein degradation where it conjugates Leu, Phe and, less efficiently, Met from aminoacyl-tRNAs to the N-termini of proteins containing an N-terminal arginine or lysine. This chain is Leucyl/phenylalanyl-tRNA--protein transferase, found in Rhizobium leguminosarum bv. trifolii (strain WSM2304).